Here is a 103-residue protein sequence, read N- to C-terminus: Large ribosomal subunit protein bL21 (103 aa).

This sequence belongs to the bacterial ribosomal protein bL21 family. In terms of assembly, part of the 50S ribosomal subunit. Contacts protein L20.

In terms of biological role, this protein binds to 23S rRNA in the presence of protein L20. The chain is Large ribosomal subunit protein bL21 from Desulforudis audaxviator (strain MP104C).